The primary structure comprises 133 residues: Small ribosomal subunit protein uS9 (133 aa).

Positions 98 to 113 (RKPLKTEGHLSRDPRA) are enriched in basic and acidic residues. Residues 98–133 (RKPLKTEGHLSRDPRAKERRKYGLKKARKAPQFSKR) form a disordered region. Residues 114-133 (KERRKYGLKKARKAPQFSKR) show a composition bias toward basic residues.

The protein belongs to the universal ribosomal protein uS9 family.

The chain is Small ribosomal subunit protein uS9 from Parasynechococcus marenigrum (strain WH8102).